Consider the following 217-residue polypeptide: MSQSLLDRFGTPLERVHLAIDRLRQGRGVLLVDDENRENEGDLIFPAETITPAQMAMMIRECSGIVCLCLTEDKLKQLELPQMVSDNTSANQTAFTLSIEARQGVTTGVSAADRVTTIRTAVADDCRPDDLARPGHVFPLRARPGGVLTRRGHTEGTVDLMRMAGYKPAGVLCELTNEDGTMARLPEIITFAERHYLSVVSIEDLALALESHMEKSA.

D-ribulose 5-phosphate contacts are provided by residues arginine 37–glutamate 38, aspartate 42, arginine 150–threonine 154, and glutamate 174. Position 38 (glutamate 38) interacts with Mg(2+). Histidine 153 contacts Mg(2+).

It belongs to the DHBP synthase family. Homodimer. Mg(2+) is required as a cofactor. Mn(2+) serves as cofactor.

It catalyses the reaction D-ribulose 5-phosphate = (2S)-2-hydroxy-3-oxobutyl phosphate + formate + H(+). Its pathway is cofactor biosynthesis; riboflavin biosynthesis; 2-hydroxy-3-oxobutyl phosphate from D-ribulose 5-phosphate: step 1/1. Catalyzes the conversion of D-ribulose 5-phosphate to formate and 3,4-dihydroxy-2-butanone 4-phosphate. This Syntrophotalea carbinolica (strain DSM 2380 / NBRC 103641 / GraBd1) (Pelobacter carbinolicus) protein is 3,4-dihydroxy-2-butanone 4-phosphate synthase.